The primary structure comprises 423 residues: ATP-citrate synthase alpha chain protein 2 (423 aa).

Residues N343, T345, and R376 each contribute to the citrate site.

The protein belongs to the succinate/malate CoA ligase beta subunit family. Heterooctamer of 4 alpha and 4 beta chains.

It localises to the cytoplasm. Its subcellular location is the cytosol. It catalyses the reaction oxaloacetate + acetyl-CoA + ADP + phosphate = citrate + ATP + CoA. Its function is as follows. ATP citrate-lyase is the primary enzyme responsible for the synthesis of cytosolic acetyl-CoA, used for the elongation of fatty acids and biosynthesis of isoprenoids, flavonoids and malonated derivatives. May supply substrate to the cytosolic acetyl-CoA carboxylase, which generates the malonyl-CoA used for the synthesis of a multitude of compounds, including very long chain fatty acids and flavonoids. In contrast to all known animal ACL enzymes having a homomeric structure, plant ACLs are composed of alpha and beta chains. The protein is ATP-citrate synthase alpha chain protein 2 (ACLA-2) of Oryza sativa subsp. japonica (Rice).